The following is a 179-amino-acid chain: Guanosine-3',5'-bis(diphosphate) 3'-pyrophosphohydrolase MESH1 (179 aa).

One can recognise an HD domain in the interval 32–127 (YINHPLGVAR…VKLADKLYNL (96 aa)). 3 residues coordinate Mn(2+): histidine 35, histidine 61, and aspartate 62. Active-site nucleophile residues include glutamate 65 and aspartate 66. Aspartate 122 contacts Mn(2+).

Belongs to the MESH1 family. It depends on Mn(2+) as a cofactor.

It catalyses the reaction guanosine 3',5'-bis(diphosphate) + H2O = GDP + diphosphate + H(+). Its function is as follows. ppGpp hydrolyzing enzyme involved in starvation response. The sequence is that of Guanosine-3',5'-bis(diphosphate) 3'-pyrophosphohydrolase MESH1 (hddc3) from Xenopus tropicalis (Western clawed frog).